A 79-amino-acid chain; its full sequence is UPF0154 protein SAG1601 (79 aa).

The helical transmembrane segment at 5–25 (IWILLIIVALFGGLVGGIFIA) threads the bilayer.

The protein belongs to the UPF0154 family.

The protein resides in the membrane. This is UPF0154 protein SAG1601 from Streptococcus agalactiae serotype V (strain ATCC BAA-611 / 2603 V/R).